Here is a 152-residue protein sequence, read N- to C-terminus: MEQYKIWVDADACPNPIKEMLFRAAERKSVPLVLVANQMLRVPPSPYISQVRVGSGFDVADQYIVDHVEATHLVITADIPLAAHVIEKGALALNPRGELYTTDNIRQKLTMRDFMEDLRSSGVHTGGPDAFSAADKQAFANSLDKWLVRVKR.

The protein belongs to the UPF0178 family.

The chain is UPF0178 protein Shewmr7_1635 from Shewanella sp. (strain MR-7).